The sequence spans 289 residues: Formamidopyrimidine-DNA glycosylase (289 aa).

Pro2 serves as the catalytic Schiff-base intermediate with DNA. The active-site Proton donor is the Glu3. The Proton donor; for beta-elimination activity role is filled by Lys61. Residues His96, Arg115, and Lys161 each coordinate DNA. The segment at 247 to 281 (SAYGQEDRPCPRCGTAIRREKFMNRSSFSCPKCQR) adopts an FPG-type zinc-finger fold. Residue Arg271 is the Proton donor; for delta-elimination activity of the active site.

The protein belongs to the FPG family. In terms of assembly, monomer. It depends on Zn(2+) as a cofactor.

The catalysed reaction is Hydrolysis of DNA containing ring-opened 7-methylguanine residues, releasing 2,6-diamino-4-hydroxy-5-(N-methyl)formamidopyrimidine.. It carries out the reaction 2'-deoxyribonucleotide-(2'-deoxyribose 5'-phosphate)-2'-deoxyribonucleotide-DNA = a 3'-end 2'-deoxyribonucleotide-(2,3-dehydro-2,3-deoxyribose 5'-phosphate)-DNA + a 5'-end 5'-phospho-2'-deoxyribonucleoside-DNA + H(+). In terms of biological role, involved in base excision repair of DNA damaged by oxidation or by mutagenic agents. Acts as a DNA glycosylase that recognizes and removes damaged bases. Has a preference for oxidized purines, such as 7,8-dihydro-8-oxoguanine (8-oxoG). Has AP (apurinic/apyrimidinic) lyase activity and introduces nicks in the DNA strand. Cleaves the DNA backbone by beta-delta elimination to generate a single-strand break at the site of the removed base with both 3'- and 5'-phosphates. The protein is Formamidopyrimidine-DNA glycosylase of Rhodococcus opacus (strain B4).